Consider the following 158-residue polypeptide: Transcription elongation factor GreA (158 aa).

The protein belongs to the GreA/GreB family.

Its function is as follows. Necessary for efficient RNA polymerase transcription elongation past template-encoded arresting sites. The arresting sites in DNA have the property of trapping a certain fraction of elongating RNA polymerases that pass through, resulting in locked ternary complexes. Cleavage of the nascent transcript by cleavage factors such as GreA or GreB allows the resumption of elongation from the new 3'terminus. GreA releases sequences of 2 to 3 nucleotides. The sequence is that of Transcription elongation factor GreA from Sinorhizobium medicae (strain WSM419) (Ensifer medicae).